The following is a 515-amino-acid chain: Cytosolic Fe-S cluster assembly factor NAR1 homolog (515 aa).

Positions 19, 65, 68, 71, 192, 247, 428, and 432 each coordinate [4Fe-4S] cluster.

The protein belongs to the NARF family.

Component of the cytosolic Fe/S protein assembly machinery. Required for maturation of extramitochondrial Fe/S proteins. May play a role in the transfer of pre-assembled Fe/S clusters to target apoproteins. This chain is Cytosolic Fe-S cluster assembly factor NAR1 homolog, found in Schizosaccharomyces japonicus (strain yFS275 / FY16936) (Fission yeast).